The chain runs to 659 residues: 3-hydroxypropionyl-coenzyme A synthetase (659 aa).

The active site involves aspartate 525. An N6-acetyllysine modification is found at lysine 616.

It belongs to the ATP-dependent AMP-binding enzyme family.

It carries out the reaction 3-hydroxypropanoate + ATP + CoA = 3-hydroxypropanoyl-CoA + AMP + diphosphate. In terms of biological role, plays a role in the autotrophic CO(2) fixation pathway. Activates 3-hydroxypropionate to its CoA ester. Can also activate propionate, and to a lesser extent acrylate, acetate and butyrate. In Sulfurisphaera tokodaii (strain DSM 16993 / JCM 10545 / NBRC 100140 / 7) (Sulfolobus tokodaii), this protein is 3-hydroxypropionyl-coenzyme A synthetase.